Here is a 689-residue protein sequence, read N- to C-terminus: Glycine--tRNA ligase beta subunit (689 aa).

Belongs to the class-II aminoacyl-tRNA synthetase family. In terms of assembly, tetramer of two alpha and two beta subunits.

The protein localises to the cytoplasm. The catalysed reaction is tRNA(Gly) + glycine + ATP = glycyl-tRNA(Gly) + AMP + diphosphate. The protein is Glycine--tRNA ligase beta subunit of Shewanella piezotolerans (strain WP3 / JCM 13877).